We begin with the raw amino-acid sequence, 614 residues long: uncharacterized protein (614 aa).

The disordered stretch occupies residues 23–68 (YPIPSHNGDGESEKNSSDSTSSKVNAKVTSSLQGAPSTNDENSVSP). Residues 49–68 (KVTSSLQGAPSTNDENSVSP) show a composition bias toward polar residues.

It to C.trachomatis CT875.

This is an uncharacterized protein from Chlamydia muridarum (strain MoPn / Nigg).